A 227-amino-acid chain; its full sequence is uncharacterized protein (227 aa).

2 consecutive transmembrane segments (helical) span residues 113 to 133 and 141 to 161; these read IMLILMILSMILIIPLFFIVF and FGICLTLLFYIAIFILTNGLI.

The protein resides in the membrane. This is an uncharacterized protein from Dictyostelium discoideum (Social amoeba).